A 100-amino-acid polypeptide reads, in one-letter code: NADH-quinone oxidoreductase subunit K (100 aa).

Transmembrane regions (helical) follow at residues 4–24 (LFHG…SLIV), 28–48 (ILFM…ALVV), and 60–80 (IMYI…LALL).

Belongs to the complex I subunit 4L family. As to quaternary structure, NDH-1 is composed of 13 different subunits. Subunits NuoA, H, J, K, L, M, N constitute the membrane sector of the complex.

It is found in the cell membrane. It catalyses the reaction a quinone + NADH + 5 H(+)(in) = a quinol + NAD(+) + 4 H(+)(out). Its function is as follows. NDH-1 shuttles electrons from NADH, via FMN and iron-sulfur (Fe-S) centers, to quinones in the respiratory chain. The immediate electron acceptor for the enzyme in this species is believed to be ubiquinone. Couples the redox reaction to proton translocation (for every two electrons transferred, four hydrogen ions are translocated across the cytoplasmic membrane), and thus conserves the redox energy in a proton gradient. The protein is NADH-quinone oxidoreductase subunit K of Buchnera aphidicola subsp. Schizaphis graminum (strain Sg).